The following is a 183-amino-acid chain: CASP-like protein UU2 (183 aa).

The Cytoplasmic segment spans residues Met1 to Pro33. Residues Ala34–Ala54 form a helical membrane-spanning segment. Over Asp55 to Ala72 the chain is Extracellular. Residues Ile73–Ile93 traverse the membrane as a helical segment. At Arg94–Thr118 the chain is on the cytoplasmic side. A helical membrane pass occupies residues Tyr119–Gly139. The Extracellular segment spans residues Ser140–Thr156. An N-linked (GlcNAc...) asparagine glycan is attached at Asn141. The chain crosses the membrane as a helical span at residues Phe157–Val177. Residues Lys178–Ala183 are Cytoplasmic-facing.

This sequence belongs to the Casparian strip membrane proteins (CASP) family. In terms of assembly, homodimer and heterodimers.

The protein localises to the cell membrane. This Selaginella moellendorffii (Spikemoss) protein is CASP-like protein UU2.